The following is a 213-amino-acid chain: Protein FAM177A1 (213 aa).

An N-acetylmethionine modification is found at methionine 1. Serine 70 bears the Phosphoserine mark. Threonine 71 is subject to Phosphothreonine. A coiled-coil region spans residues 136-173; that stretch reads IDEYYRMKKEEEEEEEENRMSEEAEKQYQQNKLQTDSI. The interval 147–175 is disordered; it reads EEEEEENRMSEEAEKQYQQNKLQTDSIVQ. Positions 162–175 are enriched in polar residues; sequence QYQQNKLQTDSIVQ.

The protein belongs to the FAM177 family.

The sequence is that of Protein FAM177A1 (FAM177A1) from Homo sapiens (Human).